The chain runs to 284 residues: Bifunctional protein FolD (284 aa).

NADP(+) contacts are provided by residues 165 to 167 (GAS), Ser190, and Ile231.

It belongs to the tetrahydrofolate dehydrogenase/cyclohydrolase family. Homodimer.

It carries out the reaction (6R)-5,10-methylene-5,6,7,8-tetrahydrofolate + NADP(+) = (6R)-5,10-methenyltetrahydrofolate + NADPH. The enzyme catalyses (6R)-5,10-methenyltetrahydrofolate + H2O = (6R)-10-formyltetrahydrofolate + H(+). The protein operates within one-carbon metabolism; tetrahydrofolate interconversion. In terms of biological role, catalyzes the oxidation of 5,10-methylenetetrahydrofolate to 5,10-methenyltetrahydrofolate and then the hydrolysis of 5,10-methenyltetrahydrofolate to 10-formyltetrahydrofolate. The protein is Bifunctional protein FolD of Bordetella avium (strain 197N).